Here is a 556-residue protein sequence, read N- to C-terminus: Small ribosomal subunit protein bS1 (556 aa).

S1 motif domains lie at threonine 35–glutamine 105, asparagine 120–lysine 183, threonine 204–lysine 272, glycine 289–lysine 359, aspartate 377–lysine 444, and aspartate 461–histidine 525.

Belongs to the bacterial ribosomal protein bS1 family.

Functionally, binds mRNA; thus facilitating recognition of the initiation point. It is needed to translate mRNA with a short Shine-Dalgarno (SD) purine-rich sequence. The chain is Small ribosomal subunit protein bS1 (rpsA) from Helicobacter pylori (strain ATCC 700392 / 26695) (Campylobacter pylori).